The primary structure comprises 197 residues: ADP-ribosylation factor-like protein 16 (197 aa).

Residues 30 to 37, 82 to 86, and 139 to 142 each bind GTP; these read GATGVGKT, ELGGC, and NKID.

The protein belongs to the small GTPase superfamily. Arf family. As to quaternary structure, interacts with RIGI; this interaction is GTP-dependent and induced upon viral infection; this interaction suppresses the RNA sensing activity of RIGI.

It is found in the cytoplasm. Its function is as follows. May suppress the RNA sensing activity of RIGI in a GTP-dependent. In Homo sapiens (Human), this protein is ADP-ribosylation factor-like protein 16.